The following is a 405-amino-acid chain: Cysteine desulfurase IscS (405 aa).

Asn156 lines the pyridoxal 5'-phosphate pocket. N6-(pyridoxal phosphate)lysine is present on Lys207. The active-site Cysteine persulfide intermediate is the Cys329. Cys329 provides a ligand contact to [2Fe-2S] cluster.

Belongs to the class-V pyridoxal-phosphate-dependent aminotransferase family. NifS/IscS subfamily. Homodimer. Forms a heterotetramer with IscU, interacts with other sulfur acceptors. Pyridoxal 5'-phosphate serves as cofactor.

Its subcellular location is the cytoplasm. It carries out the reaction (sulfur carrier)-H + L-cysteine = (sulfur carrier)-SH + L-alanine. It functions in the pathway cofactor biosynthesis; iron-sulfur cluster biosynthesis. Its function is as follows. Master enzyme that delivers sulfur to a number of partners involved in Fe-S cluster assembly, tRNA modification or cofactor biosynthesis. Catalyzes the removal of elemental sulfur atoms from cysteine to produce alanine. Functions as a sulfur delivery protein for Fe-S cluster synthesis onto IscU, an Fe-S scaffold assembly protein, as well as other S acceptor proteins. This Dechloromonas aromatica (strain RCB) protein is Cysteine desulfurase IscS.